Here is a 366-residue protein sequence, read N- to C-terminus: DNA replication and repair protein RecF (366 aa).

30 to 37 provides a ligand contact to ATP; it reads GDNGMGKT.

This sequence belongs to the RecF family.

Its subcellular location is the cytoplasm. Its function is as follows. The RecF protein is involved in DNA metabolism; it is required for DNA replication and normal SOS inducibility. RecF binds preferentially to single-stranded, linear DNA. It also seems to bind ATP. This Azobacteroides pseudotrichonymphae genomovar. CFP2 protein is DNA replication and repair protein RecF.